Here is a 133-residue protein sequence, read N- to C-terminus: MRHSNSGKKLGRTPSHRKALFRNLAKALLTHGKIRTTEIKAKELRRVVEPLITLALRNDLHARRQAYSVLGSHQLVKRLFDEIGPAFVGVPGGYTRVVKLGQPRRGDCAPLAIIEFTRTVAASEAAAAPAEAE.

Belongs to the bacterial ribosomal protein bL17 family. Part of the 50S ribosomal subunit. Contacts protein L32.

In Nitratidesulfovibrio vulgaris (strain ATCC 29579 / DSM 644 / CCUG 34227 / NCIMB 8303 / VKM B-1760 / Hildenborough) (Desulfovibrio vulgaris), this protein is Large ribosomal subunit protein bL17.